The primary structure comprises 689 residues: Calcium-responsive transcription factor (689 aa).

Disordered stretches follow at residues 1 to 46 (MEQR…PTIL) and 541 to 609 (SPDG…SVPN). Basic and acidic residues predominate over residues 13-29 (DGEKSEREAQGFEHRTC). Composition is skewed to polar residues over residues 541 to 559 (SPDG…SSSP) and 578 to 601 (LGQS…SSTG).

In terms of tissue distribution, highly expressed in brain and testis.

Its subcellular location is the nucleus. Its function is as follows. Acts as a transcriptional activator that mediates the calcium- and neuron-selective induction of BDNF exon III transcription. Binds to the consensus calcium-response element CaRE1 5'-CTATTTCGAG-3' sequence. This chain is Calcium-responsive transcription factor (Carf), found in Mus musculus (Mouse).